A 529-amino-acid chain; its full sequence is GTPase Obg (529 aa).

In terms of domain architecture, Obg spans 2–159 (ASFVDRVVLH…SDIVLELKSI (158 aa)). An OBG-type G domain is found at 160 to 343 (ADIALVGFPS…LGFAMAEIVK (184 aa)). GTP-binding positions include 166-173 (GFPSAGKS), 191-195 (FTTLI), 212-215 (DVPG), 295-298 (NKVD), and 324-326 (SAT). The Mg(2+) site is built by serine 173 and threonine 193. Residues 363 to 447 (PRAVNETGFR…DDGVVFDWEP (85 aa)) form the OCT domain. The interval 461 to 529 (GTDIRFADTG…ESGLDSGDES (69 aa)) is disordered. Residues 462 to 502 (TDIRFADTGDRPTRSQKREEQQERRDAKAAARAELEAERKA) show a composition bias toward basic and acidic residues.

The protein belongs to the TRAFAC class OBG-HflX-like GTPase superfamily. OBG GTPase family. As to quaternary structure, monomer. The cofactor is Mg(2+).

The protein resides in the cytoplasm. An essential GTPase which binds GTP, GDP and possibly (p)ppGpp with moderate affinity, with high nucleotide exchange rates and a fairly low GTP hydrolysis rate. Plays a role in control of the cell cycle, stress response, ribosome biogenesis and in those bacteria that undergo differentiation, in morphogenesis control. The polypeptide is GTPase Obg (Pseudarthrobacter chlorophenolicus (strain ATCC 700700 / DSM 12829 / CIP 107037 / JCM 12360 / KCTC 9906 / NCIMB 13794 / A6) (Arthrobacter chlorophenolicus)).